Reading from the N-terminus, the 288-residue chain is Bifunctional protein FolD (288 aa).

Residues 166–168 (GAS) and I232 each bind NADP(+).

It belongs to the tetrahydrofolate dehydrogenase/cyclohydrolase family. As to quaternary structure, homodimer.

It catalyses the reaction (6R)-5,10-methylene-5,6,7,8-tetrahydrofolate + NADP(+) = (6R)-5,10-methenyltetrahydrofolate + NADPH. It carries out the reaction (6R)-5,10-methenyltetrahydrofolate + H2O = (6R)-10-formyltetrahydrofolate + H(+). It functions in the pathway one-carbon metabolism; tetrahydrofolate interconversion. Functionally, catalyzes the oxidation of 5,10-methylenetetrahydrofolate to 5,10-methenyltetrahydrofolate and then the hydrolysis of 5,10-methenyltetrahydrofolate to 10-formyltetrahydrofolate. The chain is Bifunctional protein FolD from Escherichia coli (strain SMS-3-5 / SECEC).